The chain runs to 554 residues: Exodeoxyribonuclease 7 large subunit (554 aa).

Belongs to the XseA family. In terms of assembly, heterooligomer composed of large and small subunits.

Its subcellular location is the cytoplasm. It catalyses the reaction Exonucleolytic cleavage in either 5'- to 3'- or 3'- to 5'-direction to yield nucleoside 5'-phosphates.. Functionally, bidirectionally degrades single-stranded DNA into large acid-insoluble oligonucleotides, which are then degraded further into small acid-soluble oligonucleotides. The protein is Exodeoxyribonuclease 7 large subunit of Chlamydia pneumoniae (Chlamydophila pneumoniae).